The primary structure comprises 92 residues: Acylphosphatase (92 aa).

An Acylphosphatase-like domain is found at 5 to 90; the sequence is TYRLVICGLV…GDFVGFQLRE (86 aa). Residues R20 and N38 contribute to the active site.

The protein belongs to the acylphosphatase family.

The catalysed reaction is an acyl phosphate + H2O = a carboxylate + phosphate + H(+). In Albidiferax ferrireducens (strain ATCC BAA-621 / DSM 15236 / T118) (Rhodoferax ferrireducens), this protein is Acylphosphatase (acyP).